We begin with the raw amino-acid sequence, 176 residues long: Negative modulator of initiation of replication (176 aa).

This sequence belongs to the SeqA family. As to quaternary structure, homodimer. Polymerizes to form helical filaments.

It is found in the cytoplasm. Functionally, negative regulator of replication initiation, which contributes to regulation of DNA replication and ensures that replication initiation occurs exactly once per chromosome per cell cycle. Binds to pairs of hemimethylated GATC sequences in the oriC region, thus preventing assembly of replication proteins and re-initiation at newly replicated origins. Repression is relieved when the region becomes fully methylated. The sequence is that of Negative modulator of initiation of replication from Hamiltonella defensa subsp. Acyrthosiphon pisum (strain 5AT).